Consider the following 138-residue polypeptide: 6,7-dimethyl-8-ribityllumazine synthase (138 aa).

5-amino-6-(D-ribitylamino)uracil-binding positions include Phe-13, 45 to 47 (VFD), and 69 to 71 (AVI). 74–75 (AT) contacts (2S)-2-hydroxy-3-oxobutyl phosphate. The Proton donor role is filled by His-77. 5-amino-6-(D-ribitylamino)uracil is bound at residue Leu-102. Arg-117 lines the (2S)-2-hydroxy-3-oxobutyl phosphate pocket.

The protein belongs to the DMRL synthase family.

It carries out the reaction (2S)-2-hydroxy-3-oxobutyl phosphate + 5-amino-6-(D-ribitylamino)uracil = 6,7-dimethyl-8-(1-D-ribityl)lumazine + phosphate + 2 H2O + H(+). It participates in cofactor biosynthesis; riboflavin biosynthesis; riboflavin from 2-hydroxy-3-oxobutyl phosphate and 5-amino-6-(D-ribitylamino)uracil: step 1/2. Its function is as follows. Catalyzes the formation of 6,7-dimethyl-8-ribityllumazine by condensation of 5-amino-6-(D-ribitylamino)uracil with 3,4-dihydroxy-2-butanone 4-phosphate. This is the penultimate step in the biosynthesis of riboflavin. The protein is 6,7-dimethyl-8-ribityllumazine synthase of Methanobrevibacter smithii (strain ATCC 35061 / DSM 861 / OCM 144 / PS).